Reading from the N-terminus, the 347-residue chain is UDP-3-O-acylglucosamine N-acyltransferase (347 aa).

Catalysis depends on His-245, which acts as the Proton acceptor.

It belongs to the transferase hexapeptide repeat family. LpxD subfamily. As to quaternary structure, homotrimer.

The enzyme catalyses a UDP-3-O-[(3R)-3-hydroxyacyl]-alpha-D-glucosamine + a (3R)-hydroxyacyl-[ACP] = a UDP-2-N,3-O-bis[(3R)-3-hydroxyacyl]-alpha-D-glucosamine + holo-[ACP] + H(+). The protein operates within bacterial outer membrane biogenesis; LPS lipid A biosynthesis. Its function is as follows. Catalyzes the N-acylation of UDP-3-O-acylglucosamine using 3-hydroxyacyl-ACP as the acyl donor. Is involved in the biosynthesis of lipid A, a phosphorylated glycolipid that anchors the lipopolysaccharide to the outer membrane of the cell. The protein is UDP-3-O-acylglucosamine N-acyltransferase of Chromohalobacter salexigens (strain ATCC BAA-138 / DSM 3043 / CIP 106854 / NCIMB 13768 / 1H11).